Consider the following 130-residue polypeptide: Small ribosomal subunit protein uS9 (130 aa).

It belongs to the universal ribosomal protein uS9 family.

The polypeptide is Small ribosomal subunit protein uS9 (Acidovorax ebreus (strain TPSY) (Diaphorobacter sp. (strain TPSY))).